Reading from the N-terminus, the 331-residue chain is Phosphatidylinositol transfer protein 4 (331 aa).

Belongs to the PtdIns transfer protein family. PI transfer class IIA subfamily.

In terms of biological role, catalyzes the transfer of PtdIns and phosphatidylcholine between membranes. The chain is Phosphatidylinositol transfer protein 4 (pitD) from Dictyostelium discoideum (Social amoeba).